The sequence spans 127 residues: UPF0251 protein Ccel_0627 (127 aa).

This sequence belongs to the UPF0251 family.

In Ruminiclostridium cellulolyticum (strain ATCC 35319 / DSM 5812 / JCM 6584 / H10) (Clostridium cellulolyticum), this protein is UPF0251 protein Ccel_0627.